A 934-amino-acid polypeptide reads, in one-letter code: MALKSPAFRRKFPLLVTGGLLALQPFATSYVVAAEQFDCQVSASGGWDCKPKSPVNNLPPRPVHDGAALTSGTEAPSAEAESADKPVLVTESKGRGLKSRSEDYSHLDWVPREKLTAAQLAETGPYCGGAYIEPTRPGMADTTPKDESPTYINAKVSKYQQEQQIATLAGDVVMRQGSMQAEADEANLYQAENRGELKGNVRIRDNGSLVVGDEAQIQLDTGEAQVDNAEYVMHKSHIRGNALYAKRSENAIIRLKDGTYTTCEPGSNAWQLKGNNITLNPATGFGTATNVTLRVKDFPVFYTPYIYFPIDDRRQSGFLPPSFSSTSDTGFMLVTPYYFNLAPNYDATLYPRYMTKRGLLMEGEFRYLTKSSEGQLGGAYLNDKNDDRKEQTDYEDQRWMINWQHKGGLDERLMTEVDYTDISDPFYFQDLESDQIGVESNDVVNQQGALTWRGDTYTARLNAQAYEMATLSQITPYNKLPQITVDGMLPYHPGGFDFSYQTEAVRFDRDLKDDFVTDEDGNPDFTAGAAGRRLDENVSGIARANGNRLNFAPAISLPMQASYGYVTPKLKYVYTNYDLDLDGQGKQEALAQASQPGYGSYSSSISRDVPVFSVDSGLYFDRNTSMFGTNYRQTLEPRMFYLYVPYKDQTDIPLFDTSETLFNFDSLFRDNRFSGTDRIGDENKLSLGVTTRWIQDDGFERQNFSIGQALYFKDRKAQLPGINYRDRSDAQSDVSPYALVYNYYFNRDWRFNSDFNWDPDSRSTRSGSAMFHYQPEDNPNKVVNLGYRYRNDTIAYDSTTGTWKVGGGDYGNPGDPNYIKDYYKIQQHDFSVIWPIVPQWNVIARWQHDYNRNRTLEAMGGFEYDNCCWKLRLINRYWIDYDDFSQAAPQNEKGDHGIFLQIVLKGLGGVVGNKVESFLDQGIEGYREREDQAY.

The N-terminal stretch at 1–33 is a signal peptide; sequence MALKSPAFRRKFPLLVTGGLLALQPFATSYVVA. The interval 52-86 is disordered; it reads KSPVNNLPPRPVHDGAALTSGTEAPSAEAESADKP.

Belongs to the LptD family. Component of the lipopolysaccharide transport and assembly complex. Interacts with LptE and LptA.

It is found in the cell outer membrane. Functionally, together with LptE, is involved in the assembly of lipopolysaccharide (LPS) at the surface of the outer membrane. The sequence is that of LPS-assembly protein LptD from Pseudomonas putida (strain W619).